The following is an 87-amino-acid chain: Translation initiation factor IF-1 2 (87 aa).

Residues 1 to 72 form the S1-like domain; it reads MAKEELLEMQ…SKGRITFRHI (72 aa).

Belongs to the IF-1 family. Component of the 30S ribosomal translation pre-initiation complex which assembles on the 30S ribosome in the order IF-2 and IF-3, IF-1 and N-formylmethionyl-tRNA(fMet); mRNA recruitment can occur at any time during PIC assembly.

It is found in the cytoplasm. Functionally, one of the essential components for the initiation of protein synthesis. Stabilizes the binding of IF-2 and IF-3 on the 30S subunit to which N-formylmethionyl-tRNA(fMet) subsequently binds. Helps modulate mRNA selection, yielding the 30S pre-initiation complex (PIC). Upon addition of the 50S ribosomal subunit IF-1, IF-2 and IF-3 are released leaving the mature 70S translation initiation complex. The polypeptide is Translation initiation factor IF-1 2 (Dechloromonas aromatica (strain RCB)).